Consider the following 379-residue polypeptide: 1-deoxy-D-xylulose 5-phosphate reductoisomerase (379 aa).

NADPH contacts are provided by Thr10, Gly11, Ser12, Ile13, Asn39, and Asn121. Lys122 contacts 1-deoxy-D-xylulose 5-phosphate. Glu123 lines the NADPH pocket. Asp147 contacts Mn(2+). Ser148, Glu149, Ser173, and His196 together coordinate 1-deoxy-D-xylulose 5-phosphate. Glu149 provides a ligand contact to Mn(2+). An NADPH-binding site is contributed by Gly202. 4 residues coordinate 1-deoxy-D-xylulose 5-phosphate: Ser209, Asn214, Lys215, and Glu218. Residue Glu218 participates in Mn(2+) binding.

It belongs to the DXR family. The cofactor is Mg(2+). Requires Mn(2+) as cofactor.

It catalyses the reaction 2-C-methyl-D-erythritol 4-phosphate + NADP(+) = 1-deoxy-D-xylulose 5-phosphate + NADPH + H(+). It functions in the pathway isoprenoid biosynthesis; isopentenyl diphosphate biosynthesis via DXP pathway; isopentenyl diphosphate from 1-deoxy-D-xylulose 5-phosphate: step 1/6. Its function is as follows. Catalyzes the NADPH-dependent rearrangement and reduction of 1-deoxy-D-xylulose-5-phosphate (DXP) to 2-C-methyl-D-erythritol 4-phosphate (MEP). This chain is 1-deoxy-D-xylulose 5-phosphate reductoisomerase, found in Chlamydia caviae (strain ATCC VR-813 / DSM 19441 / 03DC25 / GPIC) (Chlamydophila caviae).